Here is a 172-residue protein sequence, read N- to C-terminus: 6,7-dimethyl-8-ribityllumazine synthase (172 aa).

5-amino-6-(D-ribitylamino)uracil is bound by residues Phe-22 and 56–58 (AFE). Position 78–79 (78–79 (LG)) interacts with (2S)-2-hydroxy-3-oxobutyl phosphate. 80–82 (AII) is a 5-amino-6-(D-ribitylamino)uracil binding site. His-88 serves as the catalytic Proton donor. Residue Phe-113 participates in 5-amino-6-(D-ribitylamino)uracil binding. (2S)-2-hydroxy-3-oxobutyl phosphate is bound at residue Arg-127.

Belongs to the DMRL synthase family.

It catalyses the reaction (2S)-2-hydroxy-3-oxobutyl phosphate + 5-amino-6-(D-ribitylamino)uracil = 6,7-dimethyl-8-(1-D-ribityl)lumazine + phosphate + 2 H2O + H(+). Its pathway is cofactor biosynthesis; riboflavin biosynthesis; riboflavin from 2-hydroxy-3-oxobutyl phosphate and 5-amino-6-(D-ribitylamino)uracil: step 1/2. Catalyzes the formation of 6,7-dimethyl-8-ribityllumazine by condensation of 5-amino-6-(D-ribitylamino)uracil with 3,4-dihydroxy-2-butanone 4-phosphate. This is the penultimate step in the biosynthesis of riboflavin. The polypeptide is 6,7-dimethyl-8-ribityllumazine synthase (Protochlamydia amoebophila (strain UWE25)).